A 495-amino-acid polypeptide reads, in one-letter code: Putative BTB/POZ domain-containing protein L98 (495 aa).

The 71-residue stretch at 15–85 (SDLTIEFVDN…FYGIETTNDY (71 aa)) folds into the BTB domain.

It belongs to the mimivirus BTB/WD family.

The sequence is that of Putative BTB/POZ domain-containing protein L98 from Acanthamoeba polyphaga (Amoeba).